A 1183-amino-acid polypeptide reads, in one-letter code: 3-hydroxy-3-methylglutaryl-coenzyme A reductase (1183 aa).

The Cytoplasmic segment spans residues 1–245; the sequence is MAAILLPQRF…DLLKNAETLD (245 aa). Residues 245–426 form the SSD domain; that stretch reads DIVIMLLGYI…FTFYTAILSI (182 aa). The helical transmembrane segment at 246-266 threads the bilayer; the sequence is IVIMLLGYIAMHLTFVSLFLS. At 267 to 273 the chain is on the lumenal side; sequence MRKMGSK. A helical transmembrane segment spans residues 274–294; the sequence is FWLGICTLFSSVFAFLFGLVV. Over 295–299 the chain is Cytoplasmic; the sequence is TTKLG. Residues 300–320 form a helical membrane-spanning segment; that stretch reads VPISVILLSEGLPFLVVTIGF. Residues 321–378 are Lumenal-facing; that stretch reads EKNIVLTRAVMSHAIEHRRIQAQNSKSGKRSPERSTQNMIQYAVQAAIKEKGFEIIRD. The chain crosses the membrane as a helical span at residues 379–399; it reads YAIEIVILVIGAASGVQGGLQ. Residues 400–402 are Cytoplasmic-facing; it reads QFC. A helical transmembrane segment spans residues 403–423; that stretch reads FLAAWTLFFDFILLFTFYTAI. Residues 424 to 482 are Lumenal-facing; the sequence is LSIKLEINRIKRHVDMRMALEDDGVSRRVAENVAKGDDELNRVRGDAPLFGRKSSSIPK. Residues 483–503 traverse the membrane as a helical segment; the sequence is FKVLMILGFIFVNIVNICSIP. At 504 to 1183 the chain is on the cytoplasmic side; the sequence is FRNPSSMSTI…SAAAIQRSKR (680 aa). The active-site Charge relay system is Glu-828. 834 to 840 is a CoA binding site; that stretch reads SASRGCK. Residues 895 to 897 and 922 to 930 each bind NADP(+); these read SRF and DAMGMNMIS. Residue Lys-962 is the Charge relay system of the active site. Residue 991-993 coordinates CoA; sequence VLK. The active-site Charge relay system is the Asp-1038. 1133 to 1134 contacts CoA; that stretch reads AH. His-1134 (proton donor) is an active-site residue. Residues 1136-1183 are disordered; the sequence is QHNRSAAPSRSTTPAPPMTPVSLAMTSAQERSASTTSMSAAAIQRSKR. 1138–1139 provides a ligand contact to NADP(+); it reads NR. Composition is skewed to low complexity over residues 1139-1148 and 1167-1177; these read RSAAPSRSTT and SASTTSMSAAA.

Belongs to the HMG-CoA reductase family.

It localises to the endoplasmic reticulum membrane. It carries out the reaction (R)-mevalonate + 2 NADP(+) + CoA = (3S)-3-hydroxy-3-methylglutaryl-CoA + 2 NADPH + 2 H(+). The protein operates within metabolic intermediate biosynthesis; (R)-mevalonate biosynthesis; (R)-mevalonate from acetyl-CoA: step 3/3. HMG-CoA reductase; part of the first module of ergosterol biosynthesis pathway that includes the early steps of the pathway, conserved across all eukaryotes, and which results in the formation of mevalonate from acetyl-coenzyme A (acetyl-CoA). In this module, the cytosolic acetyl-CoA acetyltransferase catalyzes the formation of acetoacetyl-CoA. The hydroxymethylglutaryl-CoA synthase then condenses acetyl-CoA with acetoacetyl-CoA to form HMG-CoA. The rate-limiting step of the early module is the reduction to mevalonate by the 3-hydroxy-3-methylglutaryl-coenzyme A (HMG-CoA) reductase HMGR. The protein is 3-hydroxy-3-methylglutaryl-coenzyme A reductase (HMGR) of Gibberella fujikuroi (strain CBS 195.34 / IMI 58289 / NRRL A-6831) (Bakanae and foot rot disease fungus).